Reading from the N-terminus, the 211-residue chain is Large ribosomal subunit protein bL25 (211 aa).

The protein belongs to the bacterial ribosomal protein bL25 family. CTC subfamily. In terms of assembly, part of the 50S ribosomal subunit; part of the 5S rRNA/L5/L18/L25 subcomplex. Contacts the 5S rRNA. Binds to the 5S rRNA independently of L5 and L18.

Its function is as follows. This is one of the proteins that binds to the 5S RNA in the ribosome where it forms part of the central protuberance. The protein is Large ribosomal subunit protein bL25 of Anaplasma phagocytophilum (strain HZ).